The following is a 548-amino-acid chain: Serine/threonine-protein phosphatase 2A 56 kDa regulatory subunit delta 1 isoform (548 aa).

The span at 1–10 shows a compositional bias: basic residues; that stretch reads MKGIKSKMLS. A disordered region spans residues 1 to 75; it reads MKGIKSKMLS…KKVPIDTTPT (75 aa). Residues 27-39 show a composition bias toward basic and acidic residues; that stretch reads KKSNSHDSSKAPK. Phosphotyrosine is present on Tyr-96. Phosphoserine occurs at positions 99, 109, and 542.

The protein belongs to the phosphatase 2A regulatory subunit B family. PP2A consists of a common heterodimeric core enzyme, composed of a 36 kDa catalytic subunit (subunit C) and a 65 kDa constant regulatory subunit (PR65 or subunit A), that associates with a variety of regulatory subunits. Proteins that associate with the core dimer include three families of regulatory subunits B (the R2/B/PR55/B55, R3/B''/PR72/PR130/PR59 and R5/B'/B56 families), the 48 kDa variable regulatory subunit, viral proteins, and cell signaling molecules.

The protein resides in the cytoplasm. It is found in the nucleus. In terms of biological role, the B regulatory subunit might modulate substrate selectivity and catalytic activity, and might also direct the localization of the catalytic enzyme to a particular subcellular compartment. Has a role in cell shape control and septum formation. This Schizosaccharomyces pombe (strain 972 / ATCC 24843) (Fission yeast) protein is Serine/threonine-protein phosphatase 2A 56 kDa regulatory subunit delta 1 isoform (par1).